The sequence spans 210 residues: Urease accessory protein UreE (210 aa).

Positions 136–210 are disordered; sequence PEGGAYAEPS…HGHSHAHDHK (75 aa). Basic and acidic residues-rich tracts occupy residues 145–169 and 178–196; these read SHAH…TSHD and HDHD…EHCG. Positions 197–210 are enriched in basic residues; the sequence is HDHHHGHSHAHDHK.

Belongs to the UreE family.

It localises to the cytoplasm. Involved in urease metallocenter assembly. Binds nickel. Probably functions as a nickel donor during metallocenter assembly. This is Urease accessory protein UreE from Bradyrhizobium sp. (strain ORS 278).